The sequence spans 340 residues: Dihydroorotate dehydrogenase (quinone) (340 aa).

FMN contacts are provided by residues 62–66 (AGLDK) and Thr86. Lys66 provides a ligand contact to substrate. 111-115 (NRMGF) serves as a coordination point for substrate. Residues Asn139 and Asn172 each coordinate FMN. Asn172 serves as a coordination point for substrate. Ser175 serves as the catalytic Nucleophile. Asn177 contacts substrate. Positions 217 and 245 each coordinate FMN. Substrate is bound at residue 246–247 (NT). FMN-binding positions include Gly268, Gly297, and 318–319 (YS).

This sequence belongs to the dihydroorotate dehydrogenase family. Type 2 subfamily. As to quaternary structure, monomer. It depends on FMN as a cofactor.

Its subcellular location is the cell membrane. The enzyme catalyses (S)-dihydroorotate + a quinone = orotate + a quinol. It functions in the pathway pyrimidine metabolism; UMP biosynthesis via de novo pathway; orotate from (S)-dihydroorotate (quinone route): step 1/1. Catalyzes the conversion of dihydroorotate to orotate with quinone as electron acceptor. This chain is Dihydroorotate dehydrogenase (quinone), found in Alkalilimnicola ehrlichii (strain ATCC BAA-1101 / DSM 17681 / MLHE-1).